Consider the following 511-residue polypeptide: MKLFWLLFTIGFCWAQYSSNTQQGRTSIVHLFEWRWVDIALECERYLAPKGFGGVQVSPPNENVAIHNPFRPWWERYQPVSYKLCTRSGNEDEFRNMVTRCNNVGVRIYVDAVINHMCGNAVSAGTSSTCGSYFNPGSRDFPAVPYSGWDFNDGKCKTGSGDIENYNDATQVRDCRLSGLLDLALGKDYVRSKIAEYMNHLIDIGVAGFRIDASKHMWPGDIKAILDKLHNLNSNWFPEGSKPFIYQEVIDLGGEPIKSSDYFGNGRVTEFKYGAKLGTVIRKWNGEKMSYLKNWGEGWGFMPSDRALVFVDNHDNQRGHGAGGASILTFWDARLYKMAVGFMLAHPYGFTRVMSSYRWPRYFENGKDVNDWVGPPNDNGVTKEVTINPDTTCGNDWVCEHRWRQIRNMVNFRNVVDGQPFTNWYDNGSNQVAFGRGNRGFIVFNNDDWTFSLTLQTGLPAGTYCDVISGDKINGNCTGIKIYVSDDGKAHFSISNSAEDPFIAIHAESKL.

An N-terminal signal peptide occupies residues methionine 1–alanine 15. The residue at position 16 (glutamine 16) is a Pyrrolidone carboxylic acid. Intrachain disulfides connect cysteine 43–cysteine 101, cysteine 85–cysteine 130, and cysteine 156–cysteine 175. Positions 115, 173, and 182 each coordinate Ca(2+). Arginine 210 is a binding site for chloride. Aspartate 212 (nucleophile) is an active-site residue. Histidine 216 provides a ligand contact to Ca(2+). Glutamate 248 (proton donor) is an active-site residue. Residues asparagine 313 and arginine 352 each contribute to the chloride site. Asparagine 365 is subject to Deamidated asparagine; partial. A disulfide bridge connects residues cysteine 393 and cysteine 399. At asparagine 427 the chain carries Deamidated asparagine; partial; alternate. Asparagine 427 is a glycosylation site (N-linked (GlcNAc...) asparagine). Cysteine 465 and cysteine 477 are joined by a disulfide. Asparagine 474 is modified (deamidated asparagine; partial). N-linked (GlcNAc...) asparagine glycosylation occurs at asparagine 476.

It belongs to the glycosyl hydrolase 13 family. Monomer. The cofactor is Ca(2+). Requires chloride as cofactor.

The protein localises to the secreted. It catalyses the reaction Endohydrolysis of (1-&gt;4)-alpha-D-glucosidic linkages in polysaccharides containing three or more (1-&gt;4)-alpha-linked D-glucose units.. In terms of biological role, calcium-binding enzyme that initiates starch digestion in the oral cavity. Catalyzes the hydrolysis of internal (1-&gt;4)-alpha-D-glucosidic bonds, yielding a mixture of maltose, isomaltose, small amounts of glucose as well as small linear and branched oligosaccharides called dextrins. This Homo sapiens (Human) protein is Alpha-amylase 1A.